A 778-amino-acid chain; its full sequence is Mitochondrial intermediate peptidase (778 aa).

The N-terminal 37 residues, M1–T37, are a transit peptide targeting the mitochondrion. H557 lines the Zn(2+) pocket. E558 is a catalytic residue. The Zn(2+) site is built by H561 and H564.

It belongs to the peptidase M3 family. It depends on Zn(2+) as a cofactor.

Its subcellular location is the mitochondrion matrix. It carries out the reaction Release of an N-terminal octapeptide as second stage of processing of some proteins imported into the mitochondrion.. Its function is as follows. Cleaves proteins, imported into the mitochondrion, to their mature size. While most mitochondrial precursor proteins are processed to the mature form in one step by mitochondrial processing peptidase (MPP), the sequential cleavage by MIP of an octapeptide after initial processing by MPP is a required step for a subgroup of nuclear-encoded precursor proteins destined for the matrix or the inner membrane. The polypeptide is Mitochondrial intermediate peptidase (OCT1) (Chaetomium globosum (strain ATCC 6205 / CBS 148.51 / DSM 1962 / NBRC 6347 / NRRL 1970) (Soil fungus)).